Here is a 141-residue protein sequence, read N- to C-terminus: Hemoglobin subunit alpha (141 aa).

Residues 1-141 (VLSADDKANV…VSTVLTSKYR (141 aa)) enclose the Globin domain. Ser-3 carries the phosphoserine modification. N6-succinyllysine occurs at positions 7 and 11. The residue at position 16 (Lys-16) is an N6-acetyllysine; alternate. Lys-16 carries the N6-succinyllysine; alternate modification. Position 24 is a phosphotyrosine (Tyr-24). Phosphoserine is present on Ser-35. Lys-40 is modified (N6-succinyllysine). Ser-49 carries the post-translational modification Phosphoserine. An O2-binding site is contributed by His-58. A heme b-binding site is contributed by His-87. A Phosphoserine modification is found at Ser-102. The residue at position 108 (Thr-108) is a Phosphothreonine. 2 positions are modified to phosphoserine: Ser-124 and Ser-131. Phosphothreonine is present on residues Thr-134 and Thr-137. Ser-138 carries the phosphoserine modification.

Belongs to the globin family. Heterotetramer of two alpha chains and two beta chains. In terms of tissue distribution, red blood cells.

Functionally, involved in oxygen transport from the lung to the various peripheral tissues. This is Hemoglobin subunit alpha from Peromyscus californicus (California mouse).